Here is an 85-residue protein sequence, read N- to C-terminus: Large ribosomal subunit protein uL29 (85 aa).

Belongs to the universal ribosomal protein uL29 family.

This chain is Large ribosomal subunit protein uL29, found in Thermobifida fusca (strain YX).